Consider the following 181-residue polypeptide: Large ribosomal subunit protein uL10 (181 aa).

It belongs to the universal ribosomal protein uL10 family. In terms of assembly, part of the ribosomal stalk of the 50S ribosomal subunit. The N-terminus interacts with L11 and the large rRNA to form the base of the stalk. The C-terminus forms an elongated spine to which L12 dimers bind in a sequential fashion forming a multimeric L10(L12)X complex.

Its function is as follows. Forms part of the ribosomal stalk, playing a central role in the interaction of the ribosome with GTP-bound translation factors. In Bradyrhizobium diazoefficiens (strain JCM 10833 / BCRC 13528 / IAM 13628 / NBRC 14792 / USDA 110), this protein is Large ribosomal subunit protein uL10.